Consider the following 308-residue polypeptide: Taste receptor type 2 member 43 (308 aa).

Position 1 (Met1) is a topological domain, extracellular. A helical membrane pass occupies residues 2 to 22 (ITFLPIIFSILVVFTFVIGNF). Residues 23 to 46 (ANGFIALVNSIEWVKRQKISFADQ) lie on the Cytoplasmic side of the membrane. A helical transmembrane segment spans residues 47-67 (ILTALAVSRVGLLWILLLNWY). Residues 68-86 (STVLNPAFYSVEVRTIAYN) are Extracellular-facing. The chain crosses the membrane as a helical span at residues 87–107 (LWAVINHFSNWLATSLSIFYL). Topologically, residues 108 to 126 (LKIANFSNLIFLHLRRRVK) are cytoplasmic. A helical membrane pass occupies residues 127 to 147 (SVVLVILWGPLLFLVCHLFVV). The Extracellular segment spans residues 148 to 178 (NMNEIIQTKEYEGNMTWKSKLRSAMYLSNTT). N-linked (GlcNAc...) asparagine glycosylation is found at Asn161 and Asn176. The chain crosses the membrane as a helical span at residues 179 to 199 (VTILANLVPFILTLISFLLLI). At 200–229 (CSLCKHLKKMQLRDKGSQDPSTKVHIKALQ) the chain is on the cytoplasmic side. A helical membrane pass occupies residues 230-249 (TVISLSLCAIYFLSIMISSW). Residues 250–258 (SLGRVENKA) lie on the Extracellular side of the membrane. A helical transmembrane segment spans residues 259-279 (IFMFCKAIRFSYPSAHAFILI). Topologically, residues 280–308 (WGNKKLKQTLLSVLWNVRYCVKGQKLQSP) are cytoplasmic.

Belongs to the G-protein coupled receptor T2R family.

It localises to the membrane. The protein resides in the cell projection. Its subcellular location is the cilium membrane. In terms of biological role, gustducin-coupled receptor immplicated in the perception of bitter compounds in the oral cavity and the gastrointestinal tract. Signals through PLCB2 and the calcium-regulated cation channel TRPM5. Activated by the sulfonyl amide sweeteners saccharin and acesulfame K. In airway epithelial cells, binding of bitter compounds increases the intracellular calcium ion concentration and stimulates ciliary beat frequency. May act as chemosensory receptors in airway epithelial cells to detect and eliminate potential noxious agents from the airways. In Macaca mulatta (Rhesus macaque), this protein is Taste receptor type 2 member 43 (TAS2R43).